Reading from the N-terminus, the 534-residue chain is Probable RNA-binding protein 46 (534 aa).

RRM domains are found at residues 61–139 (CEVF…VSLD), 141–223 (CRLF…WASP), and 236–308 (KVLY…LAKP).

Its subcellular location is the cytoplasm. Its function is as follows. Essential for male and female fertility, playing a crucial role in regulating germ cell development by ensuring the proper progression of meiosis prophase I. The protein is Probable RNA-binding protein 46 (rbm46) of Xenopus tropicalis (Western clawed frog).